Reading from the N-terminus, the 375-residue chain is Chlorophyll a/b light-harvesting protein PcbC (375 aa).

6 helical membrane-spanning segments follow: residues 40-60 (LLGA…SITV), 102-122 (YFVI…GGLF), 151-171 (LSLI…AFVA), 225-245 (IIGG…WHIL), 262-282 (AILS…GFFV), and 300-320 (GAAA…VWHA). A disordered region spans residues 352-375 (ARTFIGRGKPQPEPPKKKGLFGRG).

It belongs to the PsbB/PsbC family. IsiA/Pcb subfamily. As to quaternary structure, the antenna complex consists of chlorophylls (a and b) and chlorophyll a/b binding proteins. Requires chlorophyll a as cofactor. It depends on chlorophyll b as a cofactor.

It is found in the cellular thylakoid membrane. In terms of biological role, the antenna complex functions as a light receptor, it captures and delivers excitation energy to photosystems II and I. The Prochlorales pcb genes are not related to higher plant LHCs. The chain is Chlorophyll a/b light-harvesting protein PcbC (pcbC) from Prochlorothrix hollandica.